A 286-amino-acid chain; its full sequence is Sulfur carrier protein FdhD (286 aa).

Cysteine 110 serves as the catalytic Cysteine persulfide intermediate. A Mo-bis(molybdopterin guanine dinucleotide)-binding site is contributed by 247–252 (FARGEK).

This sequence belongs to the FdhD family.

It is found in the cytoplasm. Functionally, required for formate dehydrogenase (FDH) activity. Acts as a sulfur carrier protein that transfers sulfur from IscS to the molybdenum cofactor prior to its insertion into FDH. The sequence is that of Sulfur carrier protein FdhD from Wolinella succinogenes (strain ATCC 29543 / DSM 1740 / CCUG 13145 / JCM 31913 / LMG 7466 / NCTC 11488 / FDC 602W) (Vibrio succinogenes).